A 431-amino-acid polypeptide reads, in one-letter code: MANVVVVGAQWGDEGKGKIVDWLSERADVIARFQGGHNAGHTLVIDGEVFKLHALPSGVVRGGKLSVIGNGVVLDPWHLVKEIATIRDQGVDISPETLMIAENTPLILPIHGELDRAREEAASSGTKIGTTGRGIGPAYEDKVGRRSVRVADLADRATLEAHVDRALQHHDPLRRGLGIDPIDRNALIDALTEIAPQILQYAAPVWKVLNEKRKAGKRILFEGAQGALLDIDFGTYPFVTSSNVIAGQAATGVGLGPNAIDYTLGIVKAYTTRVGEGPFPTELEDADGQRLGERGHEFGTTTGRKRRCGWFDAALVRQTCATSGVTGISLTKLDVLDGFETLKICVGYDLDGTRLDYLPTAADQQARCTPIYEEMPGWSDSTEGARSWADLPAAAIKYVRRVEELIQCPVALLSTSPEREDTILVTDPFAD.

GTP contacts are provided by residues 12–18 (GDEGKGK) and 40–42 (GHT). The Proton acceptor role is filled by aspartate 13. Positions 13 and 40 each coordinate Mg(2+). Residues 13–16 (DEGK), 38–41 (NAGH), threonine 131, arginine 145, glutamine 225, threonine 240, and arginine 304 contribute to the IMP site. Catalysis depends on histidine 41, which acts as the Proton donor. 300–306 (TTTGRKR) contributes to the substrate binding site. GTP-binding positions include arginine 306, 332–334 (KLD), and 414–416 (STS).

Belongs to the adenylosuccinate synthetase family. In terms of assembly, homodimer. The cofactor is Mg(2+).

The protein resides in the cytoplasm. The enzyme catalyses IMP + L-aspartate + GTP = N(6)-(1,2-dicarboxyethyl)-AMP + GDP + phosphate + 2 H(+). Its pathway is purine metabolism; AMP biosynthesis via de novo pathway; AMP from IMP: step 1/2. Functionally, plays an important role in the de novo pathway of purine nucleotide biosynthesis. Catalyzes the first committed step in the biosynthesis of AMP from IMP. This chain is Adenylosuccinate synthetase, found in Jannaschia sp. (strain CCS1).